Consider the following 2248-residue polypeptide: Zinc finger protein lin-13 (2248 aa).

Residues 1–189 (MDEFELFQQL…TYASQYSRPP (189 aa)) form a disordered region. Residues 29–38 (QQANNNQSAP) are compositionally biased toward polar residues. The segment covering 54–92 (KQREEEEAQRLADFMQKDMKEPAVKRKRGSEEYKKDPLE) has biased composition (basic and acidic residues). Residues 145–155 (ELDENYMEENE) show a composition bias toward acidic residues. Positions 440–444 (PLVPV) match the Required for interaction with hpl-2 isoform a motif. Residues 503–525 (HTCIKCGKTFGTEFMLKHHAQSH) form a C2H2-type 1 zinc finger. Positions 603-665 (KTKKENRNIT…FTSSKQKKKR (63 aa)) are disordered. Residues 605 to 620 (KKENRNITDSNEKEFS) are compositionally biased toward basic and acidic residues. 6 consecutive C2H2-type zinc fingers follow at residues 812–837 (VRCI…SDVH), 959–982 (YSCS…TRFH), 1140–1162 (LMCY…MDDH), 1556–1578 (FKCQ…MRDH), 1601–1623 (WLCR…MAIH), and 1657–1680 (YSCG…SVAH). Polar residues predominate over residues 1859–1877 (PRSSLQTNGSSMGSVTTNG). Residues 1859 to 1900 (PRSSLQTNGSSMGSVTTNGGRVVRPSPPNSMNVTLRRAPPQQ) are disordered.

As to quaternary structure, interacts (via PLVPV motif) with chromobox protein homolog hpl-2 (via chromo (shadow subtype) domain); the interaction is direct and influences localization of hpl-2 to nuclear foci. In terms of tissue distribution, in the L3 stage, expressed in syncytial hypodermal cell 7, body wall muscles, intestinal cells, distal tip cells and many neurons.

The protein localises to the nucleus. Functionally, involved in repression of vulval fate, possibly by a tumor suppressor protein Rb-mediated mechanism. May act in a common pathway with retinoblastoma-like protein homolog lin-35 and hpl-2 to influence the ER stress response in the intestine. Plays a role in recruiting chromobox protein homolog hpl-2 to specific chromatin sites. The protein is Zinc finger protein lin-13 (lin-13) of Caenorhabditis elegans.